The following is a 422-amino-acid chain: Serine protease HTRA2, mitochondrial (422 aa).

Residues 1–17 constitute a mitochondrion transit peptide; the sequence is MALRGSHRLEVIFKRCI. Residues 18–74 constitute a propeptide that is removed on maturation; the sequence is ASPVFHSHAANRRSSQLAIKGTDPSSNGNSGQDQQNGEQKAKGWRRLVRFFVPFSLG. Polar residues predominate over residues 29–55; that stretch reads RRSSQLAIKGTDPSSNGNSGQDQQNGE. Residues 29-56 are disordered; it reads RRSSQLAIKGTDPSSNGNSGQDQQNGEQ. The chain crosses the membrane as a helical span at residues 64–82; sequence LVRFFVPFSLGAAVSAAVI. Short sequence motifs (IAP-binding) lie at residues 75-78 and 94-97; these read AAVS and SKMT. The segment at 139-302 is serine protease; sequence SNGSGFIIEQ…IPIDYVKVFL (164 aa). Residues H157, D189, and S266 each act as charge relay system in the active site. The PDZ domain maps to 325 to 410; sequence MGITMLTLTP…NLDIVILRGV (86 aa).

This sequence belongs to the peptidase S1C family. In terms of assembly, interacts with th/DIAP1 (via BIR 2 domain).

It localises to the mitochondrion intermembrane space. The protein localises to the mitochondrion membrane. The enzyme catalyses Cleavage of non-polar aliphatic amino-acids at the P1 position, with a preference for Val, Ile and Met. At the P2 and P3 positions, Arg is selected most strongly with a secondary preference for other hydrophilic residues.. Serine protease that shows proteolytic activity against a non-specific substrate beta-casein. Promotes or induces cell death either by direct binding to and inhibition of BIRC proteins (also called inhibitor of apoptosis proteins, IAPs), leading to an increase in caspase activity, or by a BIRC inhibition-independent, caspase-independent and serine protease activity-dependent mechanism. Can antagonize antiapoptotic activity of th/Diap1 by directly inducing the degradation of th/Diap1. The protein is Serine protease HTRA2, mitochondrial of Drosophila yakuba (Fruit fly).